The primary structure comprises 170 residues: Cilia- and flagella-associated protein 276 (170 aa).

Disordered regions lie at residues 1–37 and 151–170; these read MPLT…PTHL and HTAA…FFST.

Microtubule inner protein component of sperm flagellar doublet microtubules. As to expression, expressed in trachea multiciliated cells.

It localises to the cytoplasm. It is found in the cytoskeleton. The protein resides in the cilium axoneme. Its subcellular location is the flagellum axoneme. Its function is as follows. Microtubule inner protein (MIP) part of the dynein-decorated doublet microtubules (DMTs) in cilia axoneme, which is required for motile cilia beating. May play an important role for the maintenance of myelin-axon integrity. May affect intracellular Ca(2+) homeostasis. The protein is Cilia- and flagella-associated protein 276 of Bos taurus (Bovine).